The chain runs to 149 residues: Large ribosomal subunit protein eL19 (149 aa).

Basic and acidic residues predominate over residues 55–69 (KGISSARKKEVQEQK). Positions 55-93 (KGISSARKKEVQEQKRKGKRKGPGSRRGAKGARTPKKEK) are disordered. Residues 70–88 (RKGKRKGPGSRRGAKGART) show a composition bias toward basic residues.

The protein belongs to the eukaryotic ribosomal protein eL19 family. In terms of assembly, part of the 50S ribosomal subunit.

Functionally, binds to the 23S rRNA. The polypeptide is Large ribosomal subunit protein eL19 (Methanococcus vannielii).